The following is a 392-amino-acid chain: Formate-dependent phosphoribosylglycinamide formyltransferase (392 aa).

N(1)-(5-phospho-beta-D-ribosyl)glycinamide contacts are provided by residues 22–23 (EL) and glutamate 82. ATP is bound by residues arginine 114, lysine 155, 160–165 (SSGKGQ), 195–198 (EGVV), and glutamate 203. Residues 119–308 (RLAAEELQLP…EFALHVRAFL (190 aa)) enclose the ATP-grasp domain. 2 residues coordinate Mg(2+): glutamate 267 and glutamate 279. Residues aspartate 286, lysine 355, and 362–363 (RR) contribute to the N(1)-(5-phospho-beta-D-ribosyl)glycinamide site.

It belongs to the PurK/PurT family. As to quaternary structure, homodimer.

The enzyme catalyses N(1)-(5-phospho-beta-D-ribosyl)glycinamide + formate + ATP = N(2)-formyl-N(1)-(5-phospho-beta-D-ribosyl)glycinamide + ADP + phosphate + H(+). Its pathway is purine metabolism; IMP biosynthesis via de novo pathway; N(2)-formyl-N(1)-(5-phospho-D-ribosyl)glycinamide from N(1)-(5-phospho-D-ribosyl)glycinamide (formate route): step 1/1. Involved in the de novo purine biosynthesis. Catalyzes the transfer of formate to 5-phospho-ribosyl-glycinamide (GAR), producing 5-phospho-ribosyl-N-formylglycinamide (FGAR). Formate is provided by PurU via hydrolysis of 10-formyl-tetrahydrofolate. This chain is Formate-dependent phosphoribosylglycinamide formyltransferase, found in Escherichia coli O157:H7.